The primary structure comprises 144 residues: Small ribosomal subunit protein bS6 (144 aa).

Residues 95 to 144 are disordered; it reads PVTTPSPMMQDDKSKPDENSRGTAAPTVNVADDSASGAQVVAAEENDTQS. The segment covering 104-114 has biased composition (basic and acidic residues); the sequence is QDDKSKPDENS.

It belongs to the bacterial ribosomal protein bS6 family.

Binds together with bS18 to 16S ribosomal RNA. This is Small ribosomal subunit protein bS6 from Nitrosomonas eutropha (strain DSM 101675 / C91 / Nm57).